The following is a 151-amino-acid chain: Mini-ribonuclease 3 (151 aa).

D30 is an active-site residue.

This sequence belongs to the MrnC RNase family. As to quaternary structure, homodimer. It depends on Mg(2+) as a cofactor.

It is found in the cytoplasm. Functionally, involved in correct processing of both the 5' and 3' ends of 23S rRNA precursor. Processes 30S rRNA precursor transcript even in absence of ribonuclease 3 (Rnc); Rnc processes 30S rRNA into smaller rRNA precursors. This is Mini-ribonuclease 3 from Thermosynechococcus vestitus (strain NIES-2133 / IAM M-273 / BP-1).